The sequence spans 540 residues: CTP synthase (540 aa).

Residues 1 to 264 (MQYIVVTGGV…ISYLSKLSGK (264 aa)) form an amidoligase domain region. Ser-12 is a CTP binding site. UTP is bound at residue Ser-12. An ATP-binding site is contributed by 13–18 (GLGKGT). L-glutamine is bound at residue Tyr-53. An ATP-binding site is contributed by Asp-70. Residues Asp-70 and Glu-140 each contribute to the Mg(2+) site. CTP contacts are provided by residues 147 to 149 (DIE), 185 to 190 (KTKPTQ), and Arg-221. UTP is bound by residues 185-190 (KTKPTQ) and Arg-221. A Glutamine amidotransferase type-1 domain is found at 294–527 (YVDLHDAYIS…VQQALIYKKN (234 aa)). An L-glutamine-binding site is contributed by Gly-347. Cys-374 functions as the Nucleophile; for glutamine hydrolysis in the catalytic mechanism. L-glutamine is bound by residues 375–378 (LGFQ), Glu-398, and Arg-455. Residues His-500 and Glu-502 contribute to the active site.

This sequence belongs to the CTP synthase family. As to quaternary structure, homotetramer.

The catalysed reaction is UTP + L-glutamine + ATP + H2O = CTP + L-glutamate + ADP + phosphate + 2 H(+). It carries out the reaction L-glutamine + H2O = L-glutamate + NH4(+). It catalyses the reaction UTP + NH4(+) + ATP = CTP + ADP + phosphate + 2 H(+). Its pathway is pyrimidine metabolism; CTP biosynthesis via de novo pathway; CTP from UDP: step 2/2. Its activity is regulated as follows. Allosterically activated by GTP, when glutamine is the substrate; GTP has no effect on the reaction when ammonia is the substrate. The allosteric effector GTP functions by stabilizing the protein conformation that binds the tetrahedral intermediate(s) formed during glutamine hydrolysis. Inhibited by the product CTP, via allosteric rather than competitive inhibition. Its function is as follows. Catalyzes the ATP-dependent amination of UTP to CTP with either L-glutamine or ammonia as the source of nitrogen. Regulates intracellular CTP levels through interactions with the four ribonucleotide triphosphates. The protein is CTP synthase of Thermoplasma volcanium (strain ATCC 51530 / DSM 4299 / JCM 9571 / NBRC 15438 / GSS1).